The following is a 180-amino-acid chain: Large ribosomal subunit protein uL5 (180 aa).

Belongs to the universal ribosomal protein uL5 family. In terms of assembly, part of the 50S ribosomal subunit; part of the 5S rRNA/L5/L18/L25 subcomplex. Contacts the 5S rRNA and the P site tRNA. Forms a bridge to the 30S subunit in the 70S ribosome.

This is one of the proteins that bind and probably mediate the attachment of the 5S RNA into the large ribosomal subunit, where it forms part of the central protuberance. In the 70S ribosome it contacts protein S13 of the 30S subunit (bridge B1b), connecting the 2 subunits; this bridge is implicated in subunit movement. Contacts the P site tRNA; the 5S rRNA and some of its associated proteins might help stabilize positioning of ribosome-bound tRNAs. The sequence is that of Large ribosomal subunit protein uL5 from Pediococcus pentosaceus (strain ATCC 25745 / CCUG 21536 / LMG 10740 / 183-1w).